The primary structure comprises 707 residues: Polyribonucleotide nucleotidyltransferase (707 aa).

Mg(2+) contacts are provided by D488 and D494. Residues 555–614 (PRLYVMKINPEKIRDVIGKGGAVIRALTEETGTQINIEEDGTITIASNDSAKADEAKRRI) enclose the KH domain. Residues 624 to 692 (GKVYEGAITK…EKGRVKLSMK (69 aa)) enclose the S1 motif domain.

It belongs to the polyribonucleotide nucleotidyltransferase family. Requires Mg(2+) as cofactor.

The protein resides in the cytoplasm. The enzyme catalyses RNA(n+1) + phosphate = RNA(n) + a ribonucleoside 5'-diphosphate. Involved in mRNA degradation. Catalyzes the phosphorolysis of single-stranded polyribonucleotides processively in the 3'- to 5'-direction. This chain is Polyribonucleotide nucleotidyltransferase, found in Polaromonas sp. (strain JS666 / ATCC BAA-500).